The chain runs to 132 residues: Small ribosomal subunit protein uS8 (132 aa).

It belongs to the universal ribosomal protein uS8 family. Part of the 30S ribosomal subunit. Contacts proteins S5 and S12.

One of the primary rRNA binding proteins, it binds directly to 16S rRNA central domain where it helps coordinate assembly of the platform of the 30S subunit. The chain is Small ribosomal subunit protein uS8 from Borrelia garinii subsp. bavariensis (strain ATCC BAA-2496 / DSM 23469 / PBi) (Borreliella bavariensis).